A 711-amino-acid chain; its full sequence is Ribosomal RNA large subunit methyltransferase K/L (711 aa).

The THUMP domain maps to 43–154; that stretch reads TLYRTLLWSR…RENLVISLDL (112 aa).

Belongs to the methyltransferase superfamily. RlmKL family.

The protein localises to the cytoplasm. The catalysed reaction is guanosine(2445) in 23S rRNA + S-adenosyl-L-methionine = N(2)-methylguanosine(2445) in 23S rRNA + S-adenosyl-L-homocysteine + H(+). It catalyses the reaction guanosine(2069) in 23S rRNA + S-adenosyl-L-methionine = N(2)-methylguanosine(2069) in 23S rRNA + S-adenosyl-L-homocysteine + H(+). Functionally, specifically methylates the guanine in position 2445 (m2G2445) and the guanine in position 2069 (m7G2069) of 23S rRNA. In Haemophilus influenzae (strain 86-028NP), this protein is Ribosomal RNA large subunit methyltransferase K/L.